Here is a 409-residue protein sequence, read N- to C-terminus: Arginine deiminase (409 aa).

Catalysis depends on C399, which acts as the Amidino-cysteine intermediate.

It belongs to the arginine deiminase family.

The protein resides in the cytoplasm. The catalysed reaction is L-arginine + H2O = L-citrulline + NH4(+). Its pathway is amino-acid degradation; L-arginine degradation via ADI pathway; carbamoyl phosphate from L-arginine: step 1/2. This Borreliella afzelii (Borrelia afzelii) protein is Arginine deiminase (arcA).